Consider the following 362-residue polypeptide: UDP-arabinopyranose mutase 3 (362 aa).

Residues 106–108 (DDD) carry the DXD motif motif. The N-linked (Glc...) arginine glycan is linked to arginine 154.

This sequence belongs to the RGP family. In terms of assembly, heterodimer with RGP1. Mn(2+) is required as a cofactor. The cofactor is Mg(2+). Post-translationally, reversibly glycosylated in vitro by UDP-glucose, UDP-xylose and UDP-galactose, but not UDP-mannose. Specifically expressed in developing seeds.

The protein localises to the cytoplasm. It is found in the cytosol. Its subcellular location is the golgi apparatus. The enzyme catalyses UDP-beta-L-arabinofuranose = UDP-beta-L-arabinopyranose. Functionally, UDP-L-arabinose mutase involved in the biosynthesis of cell wall non-cellulosic polysaccharides. Catalyzes the interconvertion of UDP-L-arabinopyranose (UDP-Arap) and UDP-L-arabinofuranose (UDP-Araf). Preferentially catalyzes the formation of UDP-Arap from UDP-Araf. At thermodynamic equilibrium in vitro the ratio of the pyranose form over the furanose form is 95:5. Is not active on other UDP-sugars (UDP-Gal, UDP-Xyl, UDP-Glc, GDP-Man and GDP-Fuc). Is probably active as heteromer in vivo. The sequence is that of UDP-arabinopyranose mutase 3 from Arabidopsis thaliana (Mouse-ear cress).